The primary structure comprises 1368 residues: Cingulin (1368 aa).

The interaction with TJP3/ZO3 and myosin stretch occupies residues 9-378; that stretch reads MADQHIPVGQ…KQQRTVQSEF (370 aa). Residues 9 to 435 are head; the sequence is MADQHIPVGQ…EKLPSLQVQP (427 aa). Positions 41–55 match the ZIM motif; the sequence is QDSYGVAVRVQGIDG. Disordered regions lie at residues 71 to 264, 278 to 312, 1053 to 1080, 1163 to 1183, and 1308 to 1368; these read FGVQ…TKPL, GQVR…DTAD, SRKE…NSSR, NRSR…RSRG, and QQEI…TSSC. A compositionally biased stretch (polar residues) spans 83–97; sequence NASNTSPPNYQNYSS. Residues 101–294 form an interaction with F-actin region; that stretch reads GPSRSISSES…ARRSQALKDE (194 aa). Low complexity-rich tracts occupy residues 116–132 and 200–211; these read PYGS…YSSA and SQSSRDSAWSRS. Positions 150–295 are interaction with TJP2/ZO2; it reads SSLPRPLQAS…RRSQALKDER (146 aa). Residues 228–256 are compositionally biased toward polar residues; it reads SATSQQSTSVSNKTKKNGLSTSSPSNQSN. Over residues 290–312 the composition is skewed to basic and acidic residues; it reads ALKDERKRSQSLDGRKNYHDTAD. The tract at residues 377-1368 is interaction with myosin; that stretch reads EFQLKSTPDL…TESNLQTSSC (992 aa). A coiled-coil region spans residues 436–1330; it reads GEDTISLGSQ…VMEKESKRKP (895 aa). The segment covering 1320–1338 has biased composition (basic and acidic residues); the sequence is KVMEKESKRKPIRPAHDDD. Residues 1331–1368 form a tail region; that stretch reads IRPAHDDDLSSDGEFGGPYDPSSITSLLTESNLQTSSC. The segment covering 1352–1368 has biased composition (polar residues); the sequence is SSITSLLTESNLQTSSC.

It belongs to the cingulin family. Parallel homodimer. Interacts with TJP1/ZO1 and TJP2/ZO2 in vivo, and TJP3/ZO3, myosin and OCLN in vitro, possibly directly. Acts as an F-actin bundling protein in vitro. In terms of tissue distribution, localized on the cytoplasmic face of tight junctions of polarized epithelia and some endothelia.

It localises to the cell junction. The protein resides in the tight junction. In terms of biological role, probably plays a role in the formation and regulation of the tight junction (TJ) paracellular permeability barrier, possibly by linking ZO proteins to the actomyosin cytoskeleton. The chain is Cingulin from Xenopus laevis (African clawed frog).